Reading from the N-terminus, the 189-residue chain is Interferon alpha-13 (189 aa).

The N-terminal stretch at 1-23 is a signal peptide; the sequence is MARPCAFLMVLVVLSYWSACSLG. 2 disulfide bridges follow: Cys-24–Cys-122 and Cys-52–Cys-162. Residues Asn-94 and Asn-101 are each glycosylated (N-linked (GlcNAc...) asparagine).

It belongs to the alpha/beta interferon family.

The protein localises to the secreted. In terms of biological role, exhibits antiviral activity against Theiler's virus, Mengo virus and vesicular stomatitis virus. Interferons alpha stimulate the production of two enzymes: a protein kinase and an oligoadenylate synthetase. This chain is Interferon alpha-13 (Ifna13), found in Mus musculus (Mouse).